The sequence spans 392 residues: Cyclic di-GMP phosphodiesterase RocR (392 aa).

The Response regulatory domain maps to 5–126 (NVLVLEDEPF…RITALLTRYN (122 aa)). D56 is subject to 4-aspartylphosphate. An EAL domain is found at 140–392 (ELPSVADVVR…QHFLDYCSGS (253 aa)). Positions 175, 233, 265, and 295 each coordinate Mg(2+). Residue E352 is the Proton acceptor of the active site.

As to quaternary structure, homotetramer. Exhibits a highly unusual tetrameric structure arranged around a single dyad, with the four subunits adopting two distinctly different conformations, with only two active sites accessible for substrate binding. Interacts with RocS1. Mg(2+) is required as a cofactor.

It catalyses the reaction 3',3'-c-di-GMP + H2O = 5'-phosphoguanylyl(3'-&gt;5')guanosine + H(+). With respect to regulation, phosphorylation of Asp-56 probably induces local conformational changes in the response regulatory domain. These structural changes are transmitted to the adjacent EAL domain, then the signal is further transmitted down to the active site. The phosphodiesterase activity is inhibited by Ca(2+) and Zn(2+). Phosphodiesterase activity is inhibited by a benzoisothiazolinone derivative that specifically inhibited RocR, but not some other phosphodiesterases. Functionally, phosphodiesterase (PDE) that catalyzes the hydrolysis of cyclic diguanylate (c-di-GMP) to 5'-pGpG. Cannot use cyclic AMP or cyclic GMP. Part of the RocSAR two-component regulatory signaling system (also known as the SadARS system), which regulates biofilm maturation, type III secretion and expression of the cup fimbrial-gene cluster. Negatively regulates the expression of cup genes by antagonizing the activity of RocA1. In Pseudomonas aeruginosa (strain ATCC 15692 / DSM 22644 / CIP 104116 / JCM 14847 / LMG 12228 / 1C / PRS 101 / PAO1), this protein is Cyclic di-GMP phosphodiesterase RocR.